The following is a 100-amino-acid chain: Large ribosomal subunit protein bL28 (100 aa).

This sequence belongs to the bacterial ribosomal protein bL28 family.

The protein is Large ribosomal subunit protein bL28 of Gluconacetobacter diazotrophicus (strain ATCC 49037 / DSM 5601 / CCUG 37298 / CIP 103539 / LMG 7603 / PAl5).